A 98-amino-acid chain; its full sequence is NADH-ubiquinone oxidoreductase chain 4L (98 aa).

The next 3 membrane-spanning stretches (helical) occupy residues M1–I21, L30–I50, and I61–I81.

The protein belongs to the complex I subunit 4L family. In terms of assembly, core subunit of respiratory chain NADH dehydrogenase (Complex I) which is composed of 45 different subunits.

The protein resides in the mitochondrion inner membrane. It carries out the reaction a ubiquinone + NADH + 5 H(+)(in) = a ubiquinol + NAD(+) + 4 H(+)(out). In terms of biological role, core subunit of the mitochondrial membrane respiratory chain NADH dehydrogenase (Complex I) which catalyzes electron transfer from NADH through the respiratory chain, using ubiquinone as an electron acceptor. Part of the enzyme membrane arm which is embedded in the lipid bilayer and involved in proton translocation. The polypeptide is NADH-ubiquinone oxidoreductase chain 4L (MT-ND4L) (Neovison vison (American mink)).